The chain runs to 355 residues: S-adenosylmethionine:tRNA ribosyltransferase-isomerase (355 aa).

The protein belongs to the QueA family. As to quaternary structure, monomer.

The protein resides in the cytoplasm. It catalyses the reaction 7-aminomethyl-7-carbaguanosine(34) in tRNA + S-adenosyl-L-methionine = epoxyqueuosine(34) in tRNA + adenine + L-methionine + 2 H(+). It functions in the pathway tRNA modification; tRNA-queuosine biosynthesis. Transfers and isomerizes the ribose moiety from AdoMet to the 7-aminomethyl group of 7-deazaguanine (preQ1-tRNA) to give epoxyqueuosine (oQ-tRNA). This is S-adenosylmethionine:tRNA ribosyltransferase-isomerase from Pectobacterium atrosepticum (strain SCRI 1043 / ATCC BAA-672) (Erwinia carotovora subsp. atroseptica).